We begin with the raw amino-acid sequence, 412 residues long: Candidapepsin-2 (412 aa).

The segment at residues Met1 to Ala25 is a signal peptide (or 18, or 21). Positions Ile26–Arg61 are cleaved as a propeptide — activation peptide. The N-linked (GlcNAc...) asparagine glycan is linked to Asn53. Residues Tyr75 to Ser383 enclose the Peptidase A1 domain. Asp93 is a catalytic residue. Cys108 and Cys113 form a disulfide bridge. The active site involves Asp273. Cys311 and Cys345 are oxidised to a cystine.

Belongs to the peptidase A1 family. O-glycosylated.

Its subcellular location is the secreted. It catalyses the reaction Preferential cleavage at the carboxyl of hydrophobic amino acids, but fails to cleave 15-Leu-|-Tyr-16, 16-Tyr-|-Leu-17 and 24-Phe-|-Phe-25 of insulin B chain. Activates trypsinogen, and degrades keratin.. This chain is Candidapepsin-2 (SAPP2), found in Candida parapsilosis (Yeast).